The chain runs to 283 residues: Pantothenate synthetase (283 aa).

An ATP-binding site is contributed by 30 to 37 (MGNLHDGH). The active-site Proton donor is the H37. Q61 provides a ligand contact to (R)-pantoate. Q61 is a binding site for beta-alanine. 149-152 (GEKD) is an ATP binding site. Q155 is a (R)-pantoate binding site. 186-189 (LSSR) contacts ATP.

It belongs to the pantothenate synthetase family. In terms of assembly, homodimer.

The protein resides in the cytoplasm. It carries out the reaction (R)-pantoate + beta-alanine + ATP = (R)-pantothenate + AMP + diphosphate + H(+). It functions in the pathway cofactor biosynthesis; (R)-pantothenate biosynthesis; (R)-pantothenate from (R)-pantoate and beta-alanine: step 1/1. Its function is as follows. Catalyzes the condensation of pantoate with beta-alanine in an ATP-dependent reaction via a pantoyl-adenylate intermediate. In Escherichia coli (strain ATCC 8739 / DSM 1576 / NBRC 3972 / NCIMB 8545 / WDCM 00012 / Crooks), this protein is Pantothenate synthetase.